Reading from the N-terminus, the 486-residue chain is NADH-quinone oxidoreductase subunit N (486 aa).

A run of 14 helical transmembrane segments spans residues 14 to 34 (SIAP…LNFI), 45 to 65 (MLAI…SGIV), 77 to 97 (FAFI…PLTL), 105 to 125 (CSLA…EFMV), 130 to 150 (LIVI…LIAL), 163 to 183 (YFTM…IFYL), 203 to 223 (ILIA…LSLI), 237 to 257 (SEVM…IVAM), 268 to 288 (IAFI…LANI), 299 to 319 (MLAF…VIGT), 326 to 346 (LFLY…VLWF), 377 to 397 (FLMA…VFWG), 409 to 429 (GFIF…YYYL), and 459 to 479 (FIIT…KFWT).

The protein belongs to the complex I subunit 2 family. As to quaternary structure, NDH-1 is composed of 14 different subunits. Subunits NuoA, H, J, K, L, M, N constitute the membrane sector of the complex.

It localises to the cell inner membrane. It catalyses the reaction a quinone + NADH + 5 H(+)(in) = a quinol + NAD(+) + 4 H(+)(out). Its function is as follows. NDH-1 shuttles electrons from NADH, via FMN and iron-sulfur (Fe-S) centers, to quinones in the respiratory chain. The immediate electron acceptor for the enzyme in this species is believed to be ubiquinone. Couples the redox reaction to proton translocation (for every two electrons transferred, four hydrogen ions are translocated across the cytoplasmic membrane), and thus conserves the redox energy in a proton gradient. This chain is NADH-quinone oxidoreductase subunit N, found in Campylobacter hominis (strain ATCC BAA-381 / DSM 21671 / CCUG 45161 / LMG 19568 / NCTC 13146 / CH001A).